The following is a 247-amino-acid chain: V-type proton ATPase subunit D (247 aa).

The protein belongs to the V-ATPase D subunit family. In terms of assembly, V-ATPase is a heteromultimeric enzyme made up of two complexes: the ATP-hydrolytic V1 complex and the proton translocation V0 complex. The V1 complex consists of three catalytic AB heterodimers that form a heterohexamer, three peripheral stalks each consisting of EG heterodimers, one central rotor including subunits D and F, and the regulatory subunits C and H. The proton translocation complex V0 consists of the proton transport subunit a, a ring of proteolipid subunits c9c'', rotary subunit d, subunits e and f, and the accessory subunits ATP6AP1/Ac45 and ATP6AP2/PRR. Interacts with SNX10.

It is found in the membrane. Its subcellular location is the cytoplasmic vesicle. The protein localises to the clathrin-coated vesicle membrane. The protein resides in the cytoplasm. It localises to the cytoskeleton. It is found in the microtubule organizing center. Its subcellular location is the centrosome. The protein localises to the cell projection. The protein resides in the cilium. Its function is as follows. Subunit of the V1 complex of vacuolar(H+)-ATPase (V-ATPase), a multisubunit enzyme composed of a peripheral complex (V1) that hydrolyzes ATP and a membrane integral complex (V0) that translocates protons. V-ATPase is responsible for acidifying and maintaining the pH of intracellular compartments and in some cell types, is targeted to the plasma membrane, where it is responsible for acidifying the extracellular environment. May play a role in cilium biogenesis through regulation of the transport and the localization of proteins to the cilium. The polypeptide is V-type proton ATPase subunit D (Atp6v1d) (Mus musculus (Mouse)).